A 450-amino-acid chain; its full sequence is Homogentisate 1,2-dioxygenase (450 aa).

H304 functions as the Proton acceptor in the catalytic mechanism. Residues H347 and E353 each contribute to the Fe cation site. Positions 362 and 383 each coordinate homogentisate. A Fe cation-binding site is contributed by H383.

This sequence belongs to the homogentisate dioxygenase family. As to quaternary structure, hexamer; dimer of trimers. Fe cation serves as cofactor.

The catalysed reaction is homogentisate + O2 = 4-maleylacetoacetate + H(+). It functions in the pathway amino-acid degradation; L-phenylalanine degradation; acetoacetate and fumarate from L-phenylalanine: step 4/6. Its function is as follows. Involved in the catabolism of homogentisate (2,5-dihydroxyphenylacetate or 2,5-OH-PhAc), a central intermediate in the degradation of phenylalanine and tyrosine. Catalyzes the oxidative ring cleavage of the aromatic ring of homogentisate to yield maleylacetoacetate. The polypeptide is Homogentisate 1,2-dioxygenase (Burkholderia thailandensis (strain ATCC 700388 / DSM 13276 / CCUG 48851 / CIP 106301 / E264)).